A 1179-amino-acid chain; its full sequence is DNA-directed RNA polymerase subunit beta (1179 aa).

Positions 1153-1162 (MREMEDEDEG) are enriched in acidic residues. The segment at 1153–1179 (MREMEDEDEGNGEKLNLVLEGGSLNEE) is disordered.

It belongs to the RNA polymerase beta chain family. As to quaternary structure, the RNAP catalytic core consists of 2 alpha, 1 beta, 1 beta' and 1 omega subunit. When a sigma factor is associated with the core the holoenzyme is formed, which can initiate transcription.

The enzyme catalyses RNA(n) + a ribonucleoside 5'-triphosphate = RNA(n+1) + diphosphate. DNA-dependent RNA polymerase catalyzes the transcription of DNA into RNA using the four ribonucleoside triphosphates as substrates. The sequence is that of DNA-directed RNA polymerase subunit beta from Brevibacillus brevis (strain 47 / JCM 6285 / NBRC 100599).